We begin with the raw amino-acid sequence, 286 residues long: Thymidylate synthase (286 aa).

Arg-27 lines the dUMP pocket. Position 57 (His-57) interacts with (6R)-5,10-methylene-5,6,7,8-tetrahydrofolate. 148-149 (RR) is a binding site for dUMP. Cys-168 functions as the Nucleophile in the catalytic mechanism. Residues 188-191 (RSAD), Asn-199, and 229-231 (HLY) contribute to the dUMP site. A (6R)-5,10-methylene-5,6,7,8-tetrahydrofolate-binding site is contributed by Asp-191. Ala-285 is a binding site for (6R)-5,10-methylene-5,6,7,8-tetrahydrofolate.

Belongs to the thymidylate synthase family. Bacterial-type ThyA subfamily. In terms of assembly, homodimer.

It is found in the cytoplasm. The catalysed reaction is dUMP + (6R)-5,10-methylene-5,6,7,8-tetrahydrofolate = 7,8-dihydrofolate + dTMP. Its pathway is pyrimidine metabolism; dTTP biosynthesis. Catalyzes the reductive methylation of 2'-deoxyuridine-5'-monophosphate (dUMP) to 2'-deoxythymidine-5'-monophosphate (dTMP) while utilizing 5,10-methylenetetrahydrofolate (mTHF) as the methyl donor and reductant in the reaction, yielding dihydrofolate (DHF) as a by-product. This enzymatic reaction provides an intracellular de novo source of dTMP, an essential precursor for DNA biosynthesis. The protein is Thymidylate synthase of Psychrobacter sp. (strain PRwf-1).